A 352-amino-acid chain; its full sequence is Sortase SrtE1 (352 aa).

2 stretches are compositionally biased toward basic and acidic residues: residues 1-10 and 34-45; these read MTALRPERDS and RYEESAAGEENR. Residues 1 to 132 are disordered; that stretch reads MTALRPERDS…RQARARKPGA (132 aa). Over 1–139 the chain is Cytoplasmic; the sequence is MTALRPERDS…PGAAVVASRA (139 aa). The tract at residues 15 to 79 is required for protein stability; the sequence is DQGSSYGQPY…TGPIGGGPDG (65 aa). The span at 71-82 shows a compositional bias: gly residues; the sequence is GPIGGGPDGGGR. Residues 83 to 97 are compositionally biased toward basic residues; that stretch reads AARRKAAKRRHGRRG. A helical transmembrane segment spans residues 140–160; it reads IGEIFITTGVLMLLFVTYQLW. Over 161-352 the chain is Extracellular; sequence WTNVRAHAQA…SKGKPDALVS (192 aa). Residues His-251 and Cys-320 contribute to the active site. Arg-329 acts as the Proton donor in catalysis.

Belongs to the bacterial sortase family. Class E subfamily.

Its subcellular location is the cell membrane. The enzyme catalyses The enzyme catalyzes a cell wall sorting reaction in which a surface protein with a sorting signal containing a LPXTG motif is cleaved between the Thr and Gly residue. The resulting threonine carboxyl end of the protein is covalently attached to a pentaglycine cross-bridge of peptidoglycan.. In terms of biological role, transpeptidase that anchors surface proteins to the cell wall. Recognizes both Leu-Ala-x-Thr-Gly and Leu-Pro-x-Thr-Gly, with a preference for the former. Unlike the S.aureus sortase it cleaves not only the Thr-Gly motif but also the Ala-X bond; Ala-Glu and Ala-His bonds are better substrates than the Thr-Gly motif in vitro. Among its possible substrates are the chaplins ChpA, ChpB and ChpC; this enzyme is less important for ChpC attachment than is SrtE2. A double knockout mutant of srtE1 and srtE2 shows a developmental defect in aerial hyphae formation more dramatic than that due to chaplin deletion. In Streptomyces coelicolor (strain ATCC BAA-471 / A3(2) / M145), this protein is Sortase SrtE1.